A 522-amino-acid chain; its full sequence is Golgin subfamily A member 6-like protein 10 (522 aa).

Pro residues predominate over residues 1-11 (MWPQPRLPPHP). The disordered stretch occupies residues 1–77 (MWPQPRLPPH…DSATGIYGEG (77 aa)). Over residues 51-62 (NGSSPDTATSGG) the composition is skewed to polar residues. The stretch at 157-328 (SKVEQLQDET…RLCEQEKLPG (172 aa)) forms a coiled coil. A compositionally biased stretch (basic and acidic residues) spans 439-452 (KELEKSGGAEEPRG). Residues 439–503 (KELEKSGGAE…TGEAAGGAEE (65 aa)) are disordered. Composition is skewed to low complexity over residues 456 to 471 (AAAA…PQGA) and 489 to 503 (GEAV…GAEE).

The protein belongs to the GOLGA6 family.

The polypeptide is Golgin subfamily A member 6-like protein 10 (Homo sapiens (Human)).